The sequence spans 379 residues: Homoserine O-succinyltransferase (379 aa).

Residues 51–360 form the AB hydrolase-1 domain; that stretch reads NAVLICHALS…DAPQGHDAFL (310 aa). Ser157 acts as the Nucleophile in catalysis. Arg227 serves as a coordination point for substrate. Catalysis depends on residues Asp323 and His356. Residue Asp357 participates in substrate binding.

It belongs to the AB hydrolase superfamily. MetX family. In terms of assembly, homodimer.

The protein resides in the cytoplasm. The enzyme catalyses L-homoserine + succinyl-CoA = O-succinyl-L-homoserine + CoA. It participates in amino-acid biosynthesis; L-methionine biosynthesis via de novo pathway; O-succinyl-L-homoserine from L-homoserine: step 1/1. Transfers a succinyl group from succinyl-CoA to L-homoserine, forming succinyl-L-homoserine. The polypeptide is Homoserine O-succinyltransferase (Pseudomonas paraeruginosa (strain DSM 24068 / PA7) (Pseudomonas aeruginosa (strain PA7))).